The primary structure comprises 227 residues: Translation initiation factor 6 (227 aa).

Belongs to the eIF-6 family.

Functionally, binds to the 50S ribosomal subunit and prevents its association with the 30S ribosomal subunit to form the 70S initiation complex. This is Translation initiation factor 6 from Methanococcus maripaludis (strain DSM 14266 / JCM 13030 / NBRC 101832 / S2 / LL).